The following is a 179-amino-acid chain: 5'-deoxynucleotidase VV1_0013 (179 aa).

His53 lines the a divalent metal cation pocket. Residues 62 to 65 and Asp122 each bind substrate; that span reads DLPT. Asp122 is an a divalent metal cation binding site.

The protein belongs to the 5DNU family. In terms of assembly, homodimer. A divalent metal cation is required as a cofactor.

It localises to the cytoplasm. It carries out the reaction a 2'-deoxyribonucleoside 5'-phosphate + H2O = a 2'-deoxyribonucleoside + phosphate. Functionally, catalyzes the strictly specific dephosphorylation of 2'-deoxyribonucleoside 5'-monophosphates. This is 5'-deoxynucleotidase VV1_0013 from Vibrio vulnificus (strain CMCP6).